We begin with the raw amino-acid sequence, 227 residues long: NADH-quinone oxidoreductase subunit C (227 aa).

It belongs to the complex I 30 kDa subunit family. NDH-1 is composed of 14 different subunits. Subunits NuoB, C, D, E, F, and G constitute the peripheral sector of the complex.

It localises to the cell inner membrane. It catalyses the reaction a quinone + NADH + 5 H(+)(in) = a quinol + NAD(+) + 4 H(+)(out). In terms of biological role, NDH-1 shuttles electrons from NADH, via FMN and iron-sulfur (Fe-S) centers, to quinones in the respiratory chain. The immediate electron acceptor for the enzyme in this species is believed to be ubiquinone. Couples the redox reaction to proton translocation (for every two electrons transferred, four hydrogen ions are translocated across the cytoplasmic membrane), and thus conserves the redox energy in a proton gradient. The chain is NADH-quinone oxidoreductase subunit C from Coxiella burnetii (strain RSA 331 / Henzerling II).